A 641-amino-acid chain; its full sequence is Macrolide export ATP-binding/permease protein MacB (641 aa).

The region spanning 2–236 is the ABC transporter domain; that stretch reads IFLKNICKNI…LILKTMPKEK (235 aa). 34–41 provides a ligand contact to ATP; it reads GQSGSGKT. A run of 4 helical transmembrane segments spans residues 265 to 285, 519 to 539, 571 to 591, and 604 to 624; these read ILTMLGIIIGIASVVCVVALG, ACVAVIALIVGGIGVMNIMLV, MICTIGAILGVILSIFVIFAF, and AYSVLLGLLSSMFIGVVFGFF.

Belongs to the ABC transporter superfamily. Macrolide exporter (TC 3.A.1.122) family. Homodimer.

It localises to the cell inner membrane. Non-canonical ABC transporter that contains transmembrane domains (TMD), which form a pore in the inner membrane, and an ATP-binding domain (NBD), which is responsible for energy generation. Confers resistance against macrolides. The polypeptide is Macrolide export ATP-binding/permease protein MacB (Campylobacter jejuni subsp. jejuni serotype O:2 (strain ATCC 700819 / NCTC 11168)).